Consider the following 146-residue polypeptide: Leptin (146 aa).

Cys96 and Cys146 form a disulfide bridge.

Belongs to the leptin family.

It is found in the secreted. Functionally, key player in the regulation of energy balance and body weight control. Once released into the circulation, has central and peripheral effects by binding LEPR, found in many tissues, which results in the activation of several major signaling pathways. In the hypothalamus, acts as an appetite-regulating factor that induces a decrease in food intake and an increase in energy consumption by inducing anorexinogenic factors and suppressing orexigenic neuropeptides, also regulates bone mass and secretion of hypothalamo-pituitary-adrenal hormones. In the periphery, increases basal metabolism, influences reproductive function, regulates pancreatic beta-cell function and insulin secretion, is pro-angiogenic for endothelial cell and affects innate and adaptive immunity. In the arcuate nucleus of the hypothalamus, activates by depolarization POMC neurons inducing FOS and SOCS3 expression to release anorexigenic peptides and inhibits by hyperpolarization NPY neurons inducing SOCS3 with a consequent reduction on release of orexigenic peptides. In addition to its known satiety inducing effect, has a modulatory role in nutrient absorption. In the intestine, reduces glucose absorption by enterocytes by activating PKC and leading to a sequential activation of p38, PI3K and ERK signaling pathways which exerts an inhibitory effect on glucose absorption. Acts as a growth factor on certain tissues, through the activation of different signaling pathways increases expression of genes involved in cell cycle regulation such as CCND1, via JAK2-STAT3 pathway, or VEGFA, via MAPK1/3 and PI3K-AKT1 pathways. May also play an apoptotic role via JAK2-STAT3 pathway and up-regulation of BIRC5 expression. Pro-angiogenic, has mitogenic activity on vascular endothelial cells and plays a role in matrix remodeling by regulating the expression of matrix metalloproteinases (MMPs) and tissue inhibitors of metalloproteinases (TIMPs). In innate immunity, modulates the activity and function of neutrophils by increasing chemotaxis and the secretion of oxygen radicals. Increases phagocytosis by macrophages and enhances secretion of pro-inflammatory mediators. Increases cytotoxic ability of NK cells. Plays a pro-inflammatory role, in synergy with IL1B, by inducing NOS2 which promotes the production of IL6, IL8 and Prostaglandin E2, through a signaling pathway that involves JAK2, PI3K, MAP2K1/MEK1 and MAPK14/p38. In adaptive immunity, promotes the switch of memory T-cells towards T helper-1 cell immune responses. Increases CD4(+)CD25(-) T-cell proliferation and reduces autophagy during TCR (T-cell receptor) stimulation, through MTOR signaling pathway activation and BCL2 up-regulation. The sequence is that of Leptin (LEP) from Pongo pygmaeus (Bornean orangutan).